The following is a 288-amino-acid chain: Shikimate dehydrogenase (NADP(+)) (288 aa).

Shikimate is bound by residues 15–17 (SKS) and Thr-64. Lys-68 (proton acceptor) is an active-site residue. Glu-83 contributes to the NADP(+) binding site. The shikimate site is built by Asn-92 and Asp-117. NADP(+)-binding positions include 141 to 145 (GAGGA), 165 to 170 (NRTVSK), and Met-232. Tyr-234 provides a ligand contact to shikimate. Position 254 (Gly-254) interacts with NADP(+).

It belongs to the shikimate dehydrogenase family. In terms of assembly, homodimer.

The catalysed reaction is shikimate + NADP(+) = 3-dehydroshikimate + NADPH + H(+). The protein operates within metabolic intermediate biosynthesis; chorismate biosynthesis; chorismate from D-erythrose 4-phosphate and phosphoenolpyruvate: step 4/7. Involved in the biosynthesis of the chorismate, which leads to the biosynthesis of aromatic amino acids. Catalyzes the reversible NADPH linked reduction of 3-dehydroshikimate (DHSA) to yield shikimate (SA). This Psychrobacter cryohalolentis (strain ATCC BAA-1226 / DSM 17306 / VKM B-2378 / K5) protein is Shikimate dehydrogenase (NADP(+)).